The chain runs to 398 residues: MNIHEYQAKALLGEFGVPISKGVPVLKAADAEAAAKALPGPVYVVKSQIHAGGRGKGKFKEASAGDKGGVRIAKSAAEVSEFAKQMLGATLVTIQTGPAGKQVNRLYIEDGSDIDKEFYLSLLVDRETSRVSFVVSTEGGVNIEDVAHNTPEKIVTFSVDPATGIMGHHGRTVANALKLSGDLAKQAEKLTAQLYAAFVAKDMSMLEINPLVVTKQGQLRVLDAKVSFDDNALFRHPEVLALRDETEEDAKEIEASKYDLNYVTLDGNIGCMVNGAGLAMATMDIIKLYGMAPANFLDVGGSASKEKVAAAFKIITADPNVKGILVNIFGGIMKCDVIAEGVTAAVREVGLSVPLVVRLEGTNVELGKKIILESGLNVVPADNLDDAAQKIVKAVKGG.

The region spanning 9–254 (KALLGEFGVP…ETEEDAKEIE (246 aa)) is the ATP-grasp domain. ATP contacts are provided by residues Lys-46, 53 to 55 (GRG), Glu-109, Ser-112, and Glu-117. Mg(2+)-binding residues include Asn-209 and Asp-223. Substrate contacts are provided by residues Asn-274 and 331-333 (GIM).

Belongs to the succinate/malate CoA ligase beta subunit family. Heterotetramer of two alpha and two beta subunits. Requires Mg(2+) as cofactor.

The catalysed reaction is succinate + ATP + CoA = succinyl-CoA + ADP + phosphate. It catalyses the reaction GTP + succinate + CoA = succinyl-CoA + GDP + phosphate. It participates in carbohydrate metabolism; tricarboxylic acid cycle; succinate from succinyl-CoA (ligase route): step 1/1. Succinyl-CoA synthetase functions in the citric acid cycle (TCA), coupling the hydrolysis of succinyl-CoA to the synthesis of either ATP or GTP and thus represents the only step of substrate-level phosphorylation in the TCA. The beta subunit provides nucleotide specificity of the enzyme and binds the substrate succinate, while the binding sites for coenzyme A and phosphate are found in the alpha subunit. This Bradyrhizobium diazoefficiens (strain JCM 10833 / BCRC 13528 / IAM 13628 / NBRC 14792 / USDA 110) protein is Succinate--CoA ligase [ADP-forming] subunit beta.